A 528-amino-acid chain; its full sequence is GMP synthase [glutamine-hydrolyzing] (528 aa).

Positions 13 to 204 (SILILDFGSQ…VYSISKCKAD (192 aa)) constitute a Glutamine amidotransferase type-1 domain. Residue Cys-90 is the Nucleophile of the active site. Active-site residues include His-178 and Glu-180. Residues 205 to 403 (WNTETFLEET…LGLPDEIIKR (199 aa)) enclose the GMPS ATP-PPase domain. 232-238 (SGGVDSS) is a binding site for ATP.

In terms of assembly, homodimer.

It carries out the reaction XMP + L-glutamine + ATP + H2O = GMP + L-glutamate + AMP + diphosphate + 2 H(+). It functions in the pathway purine metabolism; GMP biosynthesis; GMP from XMP (L-Gln route): step 1/1. Catalyzes the synthesis of GMP from XMP. This Prochlorococcus marinus (strain MIT 9515) protein is GMP synthase [glutamine-hydrolyzing].